The sequence spans 70 residues: Large ribosomal subunit protein uL29 (70 aa).

Belongs to the universal ribosomal protein uL29 family.

This is Large ribosomal subunit protein uL29 from Gloeobacter violaceus (strain ATCC 29082 / PCC 7421).